The following is a 290-amino-acid chain: Small ribosomal subunit biogenesis GTPase RsgA (290 aa).

The region spanning 62-219 (DNYLIRPQVA…VVDTPGFSTL (158 aa)) is the CP-type G domain. GTP-binding positions include 111 to 114 (NKID) and 162 to 170 (GPSGVGKST). Positions 243, 248, 250, and 256 each coordinate Zn(2+).

It belongs to the TRAFAC class YlqF/YawG GTPase family. RsgA subfamily. In terms of assembly, monomer. Associates with 30S ribosomal subunit, binds 16S rRNA. Zn(2+) is required as a cofactor.

It is found in the cytoplasm. In terms of biological role, one of several proteins that assist in the late maturation steps of the functional core of the 30S ribosomal subunit. Helps release RbfA from mature subunits. May play a role in the assembly of ribosomal proteins into the subunit. Circularly permuted GTPase that catalyzes slow GTP hydrolysis, GTPase activity is stimulated by the 30S ribosomal subunit. The sequence is that of Small ribosomal subunit biogenesis GTPase RsgA from Clostridium novyi (strain NT).